A 25-amino-acid chain; its full sequence is Pregnancy-associated glycoprotein 59g (25 aa).

Residue Asn4 is glycosylated (N-linked (GlcNAc...) asparagine).

Belongs to the peptidase A1 family. As to expression, highly expressed in the placenta between day 60 and day 100 of gestation.

It localises to the secreted. Its subcellular location is the extracellular space. This is Pregnancy-associated glycoprotein 59g from Ovis aries (Sheep).